The chain runs to 328 residues: COP9 signalosome complex subunit 6 (328 aa).

Residues 42–175 (VALHPLVILN…VSVFESVIDI (134 aa)) form the MPN domain.

It belongs to the peptidase M67A family. CSN6 subfamily. In terms of assembly, component of the CSN complex, composed of COPS1/GPS1, COPS2, COPS3, COPS4, COPS5, COPS6, COPS7 (COPS7A or COPS7B), COPS8 and COPS9. In the complex, it probably interacts directly with COPS2, COPS4, COPS5, COPS7 (COPS7A or COPS7B) and COPS9. Interacts with the translation initiation factor EIF3S6. Interacts weakly with RBX1. Directly interacts with COP1 and 14-3-3 protein sigma/SFN. Interacts with ERCC6.

The protein resides in the cytoplasm. Its subcellular location is the nucleus. In terms of biological role, component of the COP9 signalosome complex (CSN), a complex involved in various cellular and developmental processes. The CSN complex is an essential regulator of the ubiquitin (Ubl) conjugation pathway by mediating the deneddylation of the cullin subunits of SCF-type E3 ligase complexes, leading to decrease the Ubl ligase activity of SCF-type complexes such as SCF, CSA or DDB2. The complex is also involved in phosphorylation of p53/TP53, c-jun/JUN, IkappaBalpha/NFKBIA, ITPK1 and IRF8, possibly via its association with CK2 and PKD kinases. CSN-dependent phosphorylation of TP53 and JUN promotes and protects degradation by the Ubl system, respectively. Has some glucocorticoid receptor-responsive activity. Stabilizes COP1 through reducing COP1 auto-ubiquitination and decelerating COP1 turnover rate, hence regulates the ubiquitination of COP1 targets, including SFN. The protein is COP9 signalosome complex subunit 6 (COPS6) of Pongo abelii (Sumatran orangutan).